Reading from the N-terminus, the 79-residue chain is MDVKAEVIEIIDELFMEDVSDMMDEDLFDAGVLDSMGTVELIVELENRFDIRVPVSEFGRDDWNTANKIVEGVTELRNA.

A Carrier domain is found at 1-77 (MDVKAEVIEI…KIVEGVTELR (77 aa)). At serine 35 the chain carries O-(pantetheine 4'-phosphoryl)serine.

This sequence belongs to the DltC family. In terms of processing, 4'-phosphopantetheine is transferred from CoA to a specific serine of apo-DCP.

Its subcellular location is the cytoplasm. Its pathway is cell wall biogenesis; lipoteichoic acid biosynthesis. Its function is as follows. Carrier protein involved in the D-alanylation of lipoteichoic acid (LTA). The loading of thioester-linked D-alanine onto DltC is catalyzed by D-alanine--D-alanyl carrier protein ligase DltA. The DltC-carried D-alanyl group is further transferred to cell membrane phosphatidylglycerol (PG) by forming an ester bond, probably catalyzed by DltD. D-alanylation of LTA plays an important role in modulating the properties of the cell wall in Gram-positive bacteria, influencing the net charge of the cell wall. This chain is D-alanyl carrier protein, found in Streptococcus gordonii (strain Challis / ATCC 35105 / BCRC 15272 / CH1 / DL1 / V288).